Reading from the N-terminus, the 566-residue chain is Mediator of RNA polymerase II transcription subunit 1 (566 aa).

A Phosphoserine modification is found at Ser-155. A disordered region spans residues 361 to 425 (TPSSNSNSSE…TNKSKRPSIT (65 aa)). Basic residues predominate over residues 410 to 421 (RRRRSSTNKSKR). At Ser-423 the chain carries Phosphoserine.

This sequence belongs to the Mediator complex subunit 1 family. As to quaternary structure, component of the Mediator complex, which is composed of at least 21 subunits that form three structurally distinct submodules. The Mediator head module contains MED6, MED8, MED11, SRB4/MED17, SRB5/MED18, ROX3/MED19, SRB2/MED20 and SRB6/MED22, the middle module contains MED1, MED4, NUT1/MED5, MED7, CSE2/MED9, NUT2/MED10, SRB7/MED21 and SOH1/MED31, and the tail module contains MED2, PGD1/MED3, RGR1/MED14, GAL11/MED15 and SIN4/MED16. The head and the middle modules interact directly with RNA polymerase II, whereas the elongated tail module interacts with gene-specific regulatory proteins. MED1 interacts directly with MED4 and MED7.

It is found in the nucleus. Component of the Mediator complex, a coactivator involved in the regulated transcription of nearly all RNA polymerase II-dependent genes. Mediator functions as a bridge to convey information from gene-specific regulatory proteins to the basal RNA polymerase II transcription machinery. The Mediator complex, having a compact conformation in its free form, is recruited to promoters by direct interactions with regulatory proteins and serves for the assembly of a functional preinitiation complex with RNA polymerase II and the general transcription factors. The Mediator complex unfolds to an extended conformation and partially surrounds RNA polymerase II, specifically interacting with the unphosphorylated form of the C-terminal domain (CTD) of RNA polymerase II. The Mediator complex dissociates from the RNA polymerase II holoenzyme and stays at the promoter when transcriptional elongation begins. In Saccharomyces cerevisiae (strain ATCC 204508 / S288c) (Baker's yeast), this protein is Mediator of RNA polymerase II transcription subunit 1 (MED1).